Consider the following 87-residue polypeptide: Large ribosomal subunit protein bL31B (87 aa).

The protein belongs to the bacterial ribosomal protein bL31 family. Type B subfamily. In terms of assembly, part of the 50S ribosomal subunit.

In Pseudomonas aeruginosa (strain LESB58), this protein is Large ribosomal subunit protein bL31B.